The sequence spans 82 residues: Endocuticle structural glycoprotein SgAbd-5 (82 aa).

Gln-1 is subject to Pyrrolidone carboxylic acid. A Chitin-binding type R&amp;R domain is found at 18–82 (LGQYNFAYRT…ENGYQPRVQS (65 aa)).

Its function is as follows. Component of the soft endocuticle of desert locust. The chain is Endocuticle structural glycoprotein SgAbd-5 from Schistocerca gregaria (Desert locust).